A 149-amino-acid chain; its full sequence is Calmodulin-1 (149 aa).

EF-hand domains are found at residues 8–43 (EQIS…LGQN), 44–79 (PTEA…KMKD), 81–116 (DSEE…LGEK), and 117–149 (LTDE…MMAK). Positions 21, 23, 25, 27, 32, 57, 59, 61, 63, 68, 94, 96, 98, 105, 130, 132, 134, 136, and 141 each coordinate Ca(2+).

The protein belongs to the calmodulin family. As to quaternary structure, interacts with ZAR1 (via CaMBD domain). Binds to IQD1. Binds to MEE62 in a calcium-dependent manner.

Its subcellular location is the cytoplasm. It localises to the cell membrane. In terms of biological role, calmodulin mediates the control of a large number of enzymes, ion channels and other proteins by Ca(2+). Among the enzymes to be stimulated by the calmodulin-Ca(2+) complex are a number of protein kinases and phosphatases. This chain is Calmodulin-1 (CAM1), found in Arabidopsis thaliana (Mouse-ear cress).